Here is an 859-residue protein sequence, read N- to C-terminus: Leucine--tRNA ligase (859 aa).

The short motif at 42 to 52 (PYPSGRLHMGH) is the 'HIGH' region element. A 'KMSKS' region motif is present at residues 618 to 622 (KMSKS). ATP is bound at residue Lys621.

Belongs to the class-I aminoacyl-tRNA synthetase family.

The protein localises to the cytoplasm. The catalysed reaction is tRNA(Leu) + L-leucine + ATP = L-leucyl-tRNA(Leu) + AMP + diphosphate. This Shewanella baltica (strain OS185) protein is Leucine--tRNA ligase.